We begin with the raw amino-acid sequence, 72 residues long: MAKDDVIEVEGTVAETLPNAMFKVELENGHTVLAHVSGKIRMHFIRILPGDKVTVELSPYDLTRGRITYRYK.

One can recognise an S1-like domain in the interval 1-72 (MAKDDVIEVE…TRGRITYRYK (72 aa)). Tyr60 is modified (phosphotyrosine).

It belongs to the IF-1 family. As to quaternary structure, component of the 30S ribosomal translation pre-initiation complex which assembles on the 30S ribosome in the order IF-2 and IF-3, IF-1 and N-formylmethionyl-tRNA(fMet); mRNA recruitment can occur at any time during PIC assembly.

Its subcellular location is the cytoplasm. Functionally, one of the essential components for the initiation of protein synthesis. Stabilizes the binding of IF-2 and IF-3 on the 30S subunit to which N-formylmethionyl-tRNA(fMet) subsequently binds. Helps modulate mRNA selection, yielding the 30S pre-initiation complex (PIC). Upon addition of the 50S ribosomal subunit IF-1, IF-2 and IF-3 are released leaving the mature 70S translation initiation complex. The sequence is that of Translation initiation factor IF-1 from Bacillus pumilus (strain SAFR-032).